The following is a 551-amino-acid chain: DNA ligase (551 aa).

Glu246 provides a ligand contact to ATP. Residue Lys248 is the N6-AMP-lysine intermediate of the active site. Positions 253, 268, 298, 337, 414, and 420 each coordinate ATP.

This sequence belongs to the ATP-dependent DNA ligase family. Requires Mg(2+) as cofactor.

It catalyses the reaction ATP + (deoxyribonucleotide)n-3'-hydroxyl + 5'-phospho-(deoxyribonucleotide)m = (deoxyribonucleotide)n+m + AMP + diphosphate.. Functionally, DNA ligase that seals nicks in double-stranded DNA during DNA replication, DNA recombination and DNA repair. The polypeptide is DNA ligase (Methanobrevibacter smithii (strain ATCC 35061 / DSM 861 / OCM 144 / PS)).